Consider the following 1053-residue polypeptide: Sal-like protein 4 (1053 aa).

The tract at residues 1–62 (MSRRKQAKPQ…DEVASEDEAT (62 aa)) is disordered. The span at 20–46 (EQQPQQQTPEFADAAPAAPAAGELGAP) shows a compositional bias: low complexity. Ser57 carries the phosphoserine modification. The C2H2-type 1; atypical zinc-finger motif lies at 72–94 (HVCEKCCAEFFSISEFLEHKKNC). The tract at residues 116–149 (SGAVLSHQPTSPGSKDCHRENGGSSEDMKEKPDA) is disordered. Positions 130-149 (KDCHRENGGSSEDMKEKPDA) are enriched in basic and acidic residues. Residue Lys156 forms a Glycyl lysine isopeptide (Lys-Gly) (interchain with G-Cter in SUMO1); alternate linkage. A Glycyl lysine isopeptide (Lys-Gly) (interchain with G-Cter in SUMO2); alternate cross-link involves residue Lys156. Glycyl lysine isopeptide (Lys-Gly) (interchain with G-Cter in SUMO2) cross-links involve residues Lys175, Lys190, and Lys290. Ser307 bears the Phosphoserine mark. Lys316 is covalently cross-linked (Glycyl lysine isopeptide (Lys-Gly) (interchain with G-Cter in SUMO1); alternate). Lys316 participates in a covalent cross-link: Glycyl lysine isopeptide (Lys-Gly) (interchain with G-Cter in SUMO2); alternate. Residue Lys372 forms a Glycyl lysine isopeptide (Lys-Gly) (interchain with G-Cter in SUMO2) linkage. A Glycyl lysine isopeptide (Lys-Gly) (interchain with G-Cter in SUMO1); alternate cross-link involves residue Lys374. A Glycyl lysine isopeptide (Lys-Gly) (interchain with G-Cter in SUMO2); alternate cross-link involves residue Lys374. C2H2-type zinc fingers lie at residues 382–404 (HKCKYCSKVFGTDSSLQIHLRSH) and 410–432 (FVCSVCGHRFTTKGNLKVHFHRH). Lys436 is covalently cross-linked (Glycyl lysine isopeptide (Lys-Gly) (interchain with G-Cter in SUMO2)). Residues 483-496 (VGLPQNLSSGTNPK) show a composition bias toward polar residues. The segment at 483 to 546 (VGLPQNLSSG…QGSGTPEPGS (64 aa)) is disordered. Position 541 is a phosphothreonine (Thr541). Lys550 participates in a covalent cross-link: Glycyl lysine isopeptide (Lys-Gly) (interchain with G-Cter in SUMO2). 2 consecutive C2H2-type zinc fingers follow at residues 566-588 (NECLICHRVLSCQSSLKMHYRTH) and 594-616 (FQCKICGRAFSTKGNLKTHLGVH). Residues Lys597 and Lys623 each participate in a glycyl lysine isopeptide (Lys-Gly) (interchain with G-Cter in SUMO2) cross-link. Residues 626–648 (HSCPICQKKFTNAVMLQQHIRMH) form a C2H2-type 6 zinc finger. 3 disordered regions span residues 694-714 (EEVSSQEAPSSSSKVPTPLPS), 736-776 (VGPA…QSRS), and 788-828 (LSPA…LPST). Over residues 698-708 (SQEAPSSSSKV) the composition is skewed to low complexity. 2 stretches are compositionally biased toward polar residues: residues 743–776 (LQRQGSRENGSVESDGLTNDSSSLMGDQEYQSRS) and 788–797 (LSPANSQAES). 2 positions are modified to phosphoserine: Ser776 and Ser789. The span at 810-821 (ESSENSRTEMEG) shows a compositional bias: basic and acidic residues. Lys838 participates in a covalent cross-link: Glycyl lysine isopeptide (Lys-Gly) (interchain with G-Cter in SUMO1); alternate. A Glycyl lysine isopeptide (Lys-Gly) (interchain with G-Cter in SUMO2); alternate cross-link involves residue Lys838. Ser852 is subject to Phosphoserine. The segment at 870–892 (HGCTRCGKNFSSASALQIHERTH) adopts a C2H2-type 7 zinc-finger fold. Lys896 participates in a covalent cross-link: Glycyl lysine isopeptide (Lys-Gly) (interchain with G-Cter in SUMO2). Residues 898 to 920 (FVCNICGRAFTTKGNLKVHYMTH) form a C2H2-type 8 zinc finger. Residues Lys932 and Lys947 each participate in a glycyl lysine isopeptide (Lys-Gly) (interchain with G-Cter in SUMO2) cross-link. A disordered region spans residues 1018 to 1039 (GSQSGISADVEKPSATDGVPKH). Ser1019 bears the Phosphoserine mark.

The protein belongs to the sal C2H2-type zinc-finger protein family. As to quaternary structure, interacts with POU5F1/OCT4. Interacts with NANOG. Interacts with BEND3. Interacts with NSD2 (via PHD-type zinc fingers 1, 2 and 3). Interacts with NRBP1. In terms of processing, isoform SALL4B exists primarily as a ubiquitinated form. Sumoylation with both SUMO1 and SUMO2 regulates the stability, subcellular localization, transcriptional activity, and may reduce interaction with POU5F1/OCT4. Expressed in testis. Constitutively expressed in acute myeloid leukemia (AML).

It localises to the cytoplasm. It is found in the nucleus. Transcription factor with a key role in the maintenance and self-renewal of embryonic and hematopoietic stem cells. This is Sal-like protein 4 (SALL4) from Homo sapiens (Human).